The chain runs to 257 residues: MGRVIRGQRKGAGSVFRAHVKHRKGAARLRAVDFAERHGYIKGIVKDIIHDPGRGAPLAKVVFRDPYRFKKRTELFIAAEGIHTGQFVYCGKKAQLNIGNVLPVGTMPEGTIVCCLEEKPGDRGKLARASGNYATVISHNPETKKTRVKLPSGSKKVISSANRAVVGVVAGGGRIDKPILKAGRAYHKYKAKRNCWPRVRGVAMNPVEHPFGGGNHQHIGKPSTIRRDAPAGRKVGLIAARRTGRLRGTKTVQEKEN.

Residues K42 and K149 each participate in a glycyl lysine isopeptide (Lys-Gly) (interchain with G-Cter in SUMO2) cross-link. The disordered stretch occupies residues 207-232 (VEHPFGGGNHQHIGKPSTIRRDAPAG). H216 carries the (3S)-3-hydroxyhistidine modification. Glycyl lysine isopeptide (Lys-Gly) (interchain with G-Cter in SUMO2) cross-links involve residues K234 and K250.

The protein belongs to the universal ribosomal protein uL2 family. In terms of assembly, component of the large ribosomal subunit. Interacts with CRY1. In terms of processing, hydroxylated on His-216 by RIOX1. The modification is impaired by hypoxia.

It is found in the cytoplasm. Component of the large ribosomal subunit. The ribosome is a large ribonucleoprotein complex responsible for the synthesis of proteins in the cell. In Bos taurus (Bovine), this protein is Large ribosomal subunit protein uL2 (RPL8).